A 447-amino-acid chain; its full sequence is Dual specificity protein phosphatase CDC14C (447 aa).

Residues 14–168 (PQDDVYVDIT…AMQYGFLNFN (155 aa)) are a. Positions 169-182 (SFNLDEYEHYEKAE) are linker. The interval 183-349 (NGDLNWIIPD…EGDYFRQRLK (167 aa)) is b. The region spanning 184-344 (GDLNWIIPDR…TSLWLEGDYF (161 aa)) is the Tyrosine-protein phosphatase domain. The Phosphocysteine intermediate role is filled by cysteine 284. Residues 426 to 446 (FTLCSVVIWWIVCDYILPILL) traverse the membrane as a helical segment.

This sequence belongs to the protein-tyrosine phosphatase family. Non-receptor class CDC14 subfamily.

Its subcellular location is the endoplasmic reticulum membrane. It carries out the reaction O-phospho-L-tyrosyl-[protein] + H2O = L-tyrosyl-[protein] + phosphate. The enzyme catalyses O-phospho-L-seryl-[protein] + H2O = L-seryl-[protein] + phosphate. The catalysed reaction is O-phospho-L-threonyl-[protein] + H2O = L-threonyl-[protein] + phosphate. In terms of biological role, dual-specificity phosphatase. Preferentially dephosphorylates proteins modified by proline-directed kinases. The protein is Dual specificity protein phosphatase CDC14C of Homo sapiens (Human).